Here is a 196-residue protein sequence, read N- to C-terminus: MINKICGKIVEKRESSIVIVALPFEFEILVSSFCNAELGLQEDVEILTYLHLREDEIRLFGFLNVSEREVFEKLISVDGIGPKAALRILSGIKYNEFRDAVEREDVKLISNVKGIGNKMAGKIFLKLRGKLVKVNEASSGVLKFKELEQSIVNMGFDRKLVAAAIKEIMLIDEFLMLRQVDQEQFLFREILRKLSG.

The tract at residues 1–63 (MINKICGKIV…EDEIRLFGFL (63 aa)) is domain I. Residues 64–135 (NVSEREVFEK…KLRGKLVKVN (72 aa)) are domain II. Residues 135–138 (NEAS) form a flexible linker region. The domain III stretch occupies residues 139–196 (SGVLKFKELEQSIVNMGFDRKLVAAAIKEIMLIDEFLMLRQVDQEQFLFREILRKLSG).

This sequence belongs to the RuvA family. As to quaternary structure, homotetramer. Forms an RuvA(8)-RuvB(12)-Holliday junction (HJ) complex. HJ DNA is sandwiched between 2 RuvA tetramers; dsDNA enters through RuvA and exits via RuvB. An RuvB hexamer assembles on each DNA strand where it exits the tetramer. Each RuvB hexamer is contacted by two RuvA subunits (via domain III) on 2 adjacent RuvB subunits; this complex drives branch migration. In the full resolvosome a probable DNA-RuvA(4)-RuvB(12)-RuvC(2) complex forms which resolves the HJ.

Its subcellular location is the cytoplasm. In terms of biological role, the RuvA-RuvB-RuvC complex processes Holliday junction (HJ) DNA during genetic recombination and DNA repair, while the RuvA-RuvB complex plays an important role in the rescue of blocked DNA replication forks via replication fork reversal (RFR). RuvA specifically binds to HJ cruciform DNA, conferring on it an open structure. The RuvB hexamer acts as an ATP-dependent pump, pulling dsDNA into and through the RuvAB complex. HJ branch migration allows RuvC to scan DNA until it finds its consensus sequence, where it cleaves and resolves the cruciform DNA. This Borrelia turicatae (strain 91E135) protein is Holliday junction branch migration complex subunit RuvA.